Consider the following 117-residue polypeptide: Mini-circle uncharacterized 12.9 kDa protein (117 aa).

The polypeptide is Mini-circle uncharacterized 12.9 kDa protein (Streptomyces coelicolor (strain ATCC BAA-471 / A3(2) / M145)).